The chain runs to 156 residues: Snaclec A14 (156 aa).

The first 23 residues, 1–23, serve as a signal peptide directing secretion; sequence MGRFIFVRVGLLVVFLSLSGTGA. 3 disulfide bridges follow: Cys-27-Cys-38, Cys-55-Cys-152, and Cys-127-Cys-144. In terms of domain architecture, C-type lectin spans 34 to 153; sequence YDQHCYKAFD…CGDDYPFVCK (120 aa). Asn-141 is a glycosylation site (N-linked (GlcNAc...) asparagine).

The protein belongs to the snaclec family. In terms of assembly, heterodimer; disulfide-linked. In terms of tissue distribution, expressed by the venom gland.

The protein resides in the secreted. Interferes with one step of hemostasis (modulation of platelet aggregation, or coagulation cascade, for example). This Macrovipera lebetinus (Levantine viper) protein is Snaclec A14.